Here is a 155-residue protein sequence, read N- to C-terminus: uncharacterized protein (155 aa).

An N-terminal signal peptide occupies residues 1–23 (MTILSLSRFMLAGVLLASFNASA).

The protein to E.coli YfjT.

This is an uncharacterized protein from Escherichia coli (strain K12).